The chain runs to 839 residues: uncharacterized protein (839 aa).

This is an uncharacterized protein from Mycoplasma pneumoniae (strain ATCC 29342 / M129 / Subtype 1) (Mycoplasmoides pneumoniae).